A 158-amino-acid chain; its full sequence is Large ribosomal subunit protein uL16 (158 aa).

The protein belongs to the universal ribosomal protein uL16 family. Part of the 50S ribosomal subunit.

Binds 23S rRNA and is also seen to make contacts with the A and possibly P site tRNAs. The chain is Large ribosomal subunit protein uL16 from Prochlorococcus marinus (strain MIT 9303).